Consider the following 263-residue polypeptide: Acyl-[acyl-carrier-protein]--UDP-N-acetylglucosamine O-acyltransferase (263 aa).

Belongs to the transferase hexapeptide repeat family. LpxA subfamily. In terms of assembly, homotrimer.

The protein resides in the cytoplasm. The enzyme catalyses a (3R)-hydroxyacyl-[ACP] + UDP-N-acetyl-alpha-D-glucosamine = a UDP-3-O-[(3R)-3-hydroxyacyl]-N-acetyl-alpha-D-glucosamine + holo-[ACP]. The protein operates within glycolipid biosynthesis; lipid IV(A) biosynthesis; lipid IV(A) from (3R)-3-hydroxytetradecanoyl-[acyl-carrier-protein] and UDP-N-acetyl-alpha-D-glucosamine: step 1/6. Functionally, involved in the biosynthesis of lipid A, a phosphorylated glycolipid that anchors the lipopolysaccharide to the outer membrane of the cell. The protein is Acyl-[acyl-carrier-protein]--UDP-N-acetylglucosamine O-acyltransferase of Caulobacter vibrioides (strain ATCC 19089 / CIP 103742 / CB 15) (Caulobacter crescentus).